The following is a 71-amino-acid chain: Conotoxin Bu23 (71 aa).

Residues 1-21 form the signal peptide; the sequence is MGMRMMVTVFLLGVLATTVVS. The propeptide occupies 22-37; sequence LRSNRASDGRRGIVNK. Asn-70 is subject to Asparagine amide.

This sequence belongs to the conotoxin A superfamily. Contains 3 disulfide bonds. They are not indicated here, since framework IV presents two different connectivities (I-V, II-III, IV-VI and I-III, II-V, IV-VI). Expressed by the venom duct.

The protein resides in the secreted. This chain is Conotoxin Bu23, found in Conus bullatus (Bubble cone).